A 171-amino-acid polypeptide reads, in one-letter code: Iron-sulfur cluster assembly protein 3 (171 aa).

The N-terminal 49 residues, 1–49 (MLRQTTKRAFLGLASQNPTPFPVVSRLYHPNVIDHYDNPRNVGSFDKND), are a transit peptide targeting the mitochondrion.

This sequence belongs to the NifU family. Component of the core Fe-S cluster (ISC) assembly machinery. [2Fe-2S] cluster is required as a cofactor. In terms of tissue distribution, mostly expressed in flowers and pollen, and, to a lower extent, in leaves and roots.

It is found in the mitochondrion matrix. Its pathway is cofactor biosynthesis; iron-sulfur cluster biosynthesis. Its function is as follows. Scaffold protein for the de novo synthesis of iron-sulfur (Fe-S) clusters within mitochondria, which is required for maturation of both mitochondrial and cytoplasmic [2Fe-2S] and [4Fe-4S] proteins. First, a [2Fe-2S] cluster is transiently assembled on the scaffold protein ISCU (ISU1, ISU2 or ISU3). In a second step, the cluster is released from ISCU, transferred to a glutaredoxin, followed by the formation of mitochondrial [2Fe-2S] proteins, the synthesis of [4Fe-4S] clusters and their target-specific insertion into the recipient apoproteins. Cluster assembly on ISCU depends on the function of the cysteine desulfurase complex NFS1-ISD11, which serves as the sulfur donor for cluster synthesis, the iron-binding protein frataxin as the putative iron donor, and the electron transfer chain comprised of ferredoxin reductase and ferredoxin, which receive their electrons from NADH. This Arabidopsis thaliana (Mouse-ear cress) protein is Iron-sulfur cluster assembly protein 3 (ISU3).